Consider the following 247-residue polypeptide: Mast cell protease 8 (247 aa).

The N-terminal stretch at 1-19 (MFLLLVLLVAALPVNAEGG) is a signal peptide. A propeptide (activation peptide) is located at residue E20. The Peptidase S1 domain occupies 21–242 (IIWGTESKPH…FMPWIRKTMK (222 aa)). Residue N41 is glycosylated (N-linked (GlcNAc...) asparagine). C49 and C65 are joined by a disulfide. Residue H64 is the Charge relay system of the active site. N71 and N101 each carry an N-linked (GlcNAc...) asparagine glycan. The active-site Charge relay system is D107. 2 disulfide bridges follow: C141/C206 and C171/C185. N-linked (GlcNAc...) asparagine glycosylation is found at N151 and N179. S200 (charge relay system) is an active-site residue.

The protein belongs to the peptidase S1 family. Granzyme subfamily.

It localises to the secreted. The protein localises to the cytoplasmic granule. The sequence is that of Mast cell protease 8 (Mcpt8) from Mus musculus (Mouse).